The sequence spans 359 residues: Fe-S cluster assembly protein DRE2 (359 aa).

The segment at 1–159 is N-terminal SAM-like domain; sequence MANILLLLHP…LFKKLSSNSN (159 aa). The segment at 152-187 is disordered; it reads KKLSSNSNNNNNSSSPIGLTDSSAANTDEETDEANV. The segment covering 155 to 166 has biased composition (low complexity); the sequence is SSNSNNNNNSSS. Residues 159–228 form a linker region; that stretch reads NNNNNSSSPI…DDLIKDSNQL (70 aa). The segment covering 167-177 has biased composition (polar residues); that stretch reads PIGLTDSSAAN. 4 residues coordinate [2Fe-2S] cluster: Cys240, Cys252, Cys255, and Cys257. Positions 240–257 are fe-S binding site A; sequence CEIPNGKKRRKACKDCTC. Residues Cys322, Cys325, Cys333, and Cys336 each contribute to the [4Fe-4S] cluster site. Short sequence motifs (cx2C motif) lie at residues 322 to 325 and 333 to 336; these read CGSC and CDGC. Residues 322–336 are fe-S binding site B; it reads CGSCALGDAFRCDGC.

The protein belongs to the anamorsin family. As to quaternary structure, monomer. Interacts with TAH18. Interacts with MIA40. [2Fe-2S] cluster serves as cofactor. It depends on [4Fe-4S] cluster as a cofactor.

The protein localises to the cytoplasm. Its subcellular location is the mitochondrion intermembrane space. Component of the cytosolic iron-sulfur (Fe-S) protein assembly (CIA) machinery required for the maturation of extramitochondrial Fe-S proteins. Part of an electron transfer chain functioning in an early step of cytosolic Fe-S biogenesis, facilitating the de novo assembly of a [4Fe-4S] cluster on the scaffold complex CFD1-NBP35. Electrons are transferred to DRE2 from NADPH via the FAD- and FMN-containing protein TAH18. TAH18-DRE2 are also required for the assembly of the diferric tyrosyl radical cofactor of ribonucleotide reductase (RNR), probably by providing electrons for reduction during radical cofactor maturation in the catalytic small subunit RNR2. This chain is Fe-S cluster assembly protein DRE2, found in Scheffersomyces stipitis (strain ATCC 58785 / CBS 6054 / NBRC 10063 / NRRL Y-11545) (Yeast).